Consider the following 592-residue polypeptide: Bifunctional dolabella-3,7-dien-18-ol synthase/dolathalia-3,7,11-triene synthase TPS20, chloroplastic (592 aa).

A chloroplast-targeting transit peptide spans 1 to 52; that stretch reads MEAITKNGSLSQTLVHCGPKSLSSFIPVRCLRFSKNPFPKKLVVTRARTSIN. Positions 349, 353, 491, 495, and 499 each coordinate Mg(2+). Positions 349–353 match the DDXXD motif motif; it reads DDLYD.

The protein belongs to the terpene synthase family. Tpsa subfamily. Mg(2+) serves as cofactor. Mn(2+) is required as a cofactor.

Its subcellular location is the plastid. The protein resides in the chloroplast. The enzyme catalyses (2E,6E,10E)-geranylgeranyl diphosphate + H2O = (3E,7E)-dolabella-3,7-dien-18-ol + diphosphate. It carries out the reaction (2E,6E,10E)-geranylgeranyl diphosphate = (3E,7E)-dolathalia-3,7,11-triene + diphosphate. Its pathway is secondary metabolite biosynthesis; terpenoid biosynthesis. Involved in the biosynthesis of diterpenes in roots. Possesses dolabella-3,7-dien-18-ol synthase activity and dolathalia-3,7,11-triene synthase activity in vitro. Catalyzes the formation of dolabella-3,7-dien-18-ol and dolathalia-3,7,11-triene from geranygeranyl diphosphate (GGPP). Does not seem to be involved in sesquiterpene biosynthesis. The polypeptide is Bifunctional dolabella-3,7-dien-18-ol synthase/dolathalia-3,7,11-triene synthase TPS20, chloroplastic (Arabidopsis thaliana (Mouse-ear cress)).